The sequence spans 492 residues: Transmembrane protease serine 2 (492 aa).

Residues 1–84 are Cytoplasmic-facing; sequence MALNSGSPPA…TVCTSKTKKA (84 aa). Residues 85–105 form a helical; Signal-anchor for type II membrane protein membrane-spanning segment; sequence LCITLTLGTFLVGAALAAGLL. Topologically, residues 106–492 are extracellular; the sequence is WKFMGSKCSN…WIYRQMRADG (387 aa). Intrachain disulfides connect Cys-113–Cys-126, Cys-120–Cys-139, Cys-133–Cys-148, Cys-172–Cys-231, Cys-185–Cys-241, Cys-244–Cys-365, Cys-281–Cys-297, Cys-410–Cys-426, and Cys-437–Cys-465. The LDL-receptor class A domain maps to 118–148; the sequence is IECDSSGTCINPSNWCDGVSHCPGGEDENRC. Residues Asn-131, Asp-134, Val-136, Asp-144, and Glu-145 each contribute to the Ca(2+) site. The region spanning 149-242 is the SRCR domain; sequence VRLYGPNFIL…SKAVVSLRCI (94 aa). N-linked (GlcNAc...) asparagine glycans are attached at residues Asn-213 and Asn-249. The 237-residue stretch at 256 to 492 folds into the Peptidase S1 domain; sequence IVGGESALPG…WIYRQMRADG (237 aa). Active-site charge relay system residues include His-296 and Asp-345. An HKU1-CoV S protein-binding region spans residues 340–470; it reads KTKNNDIALM…WGSGCAKAYR (131 aa). The active-site Charge relay system is the Ser-441.

It belongs to the peptidase S1 family. In terms of assembly, the catalytically active form interacts with ACE2. Proteolytically processed; by an autocatalytic mechanism. Autocleavage induces active conformation. In terms of tissue distribution, expressed in several tissues that comprise large populations of epithelial cells with the highest level of transcripts measured in the prostate gland. Expressed in type II pneumocytes in the lung (at protein level). Expressed strongly in small intestine. Also expressed in colon, stomach and salivary gland. Coexpressed with ACE2 within lung type II pneumocytes, ileal absorptive enterocytes, intestinal epithelial cells, cornea, gallbladder and nasal goblet secretory cells.

It localises to the cell membrane. The protein localises to the secreted. The catalysed reaction is The enzyme cleaves angiotensin-converting enzyme 2 (EC 3.4.17.23) and cleaves influenzea A and B virus and coronavirus spike glycoproteins at arginine residues.. Its function is as follows. Plasma membrane-anchored serine protease that cleaves at arginine residues. Participates in proteolytic cascades of relevance for the normal physiologic function of the prostate. Androgen-induced TMPRSS2 activates several substrates that include pro-hepatocyte growth factor/HGF, the protease activated receptor-2/F2RL1 or matriptase/ST14 leading to extracellular matrix disruption and metastasis of prostate cancer cells. In addition, activates trigeminal neurons and contribute to both spontaneous pain and mechanical allodynia. Functionally, (Microbial infection) Facilitates human coronaviruses SARS-CoV and SARS-CoV-2 infections via two independent mechanisms, proteolytic cleavage of ACE2 receptor which promotes viral uptake, and cleavage of coronavirus spike glycoproteins which activates the glycoprotein for host cell entry. The cleavage of SARS-COV2 spike glycoprotein occurs between the S2 and S2' site. Upon SARS-CoV-2 infection, increases syncytia formation by accelerating the fusion process. Proteolytically cleaves and activates the spike glycoproteins of human coronavirus 229E (HCoV-229E) and human coronavirus EMC (HCoV-EMC) and the fusion glycoproteins F0 of Sendai virus (SeV), human metapneumovirus (HMPV), human parainfluenza 1, 2, 3, 4a and 4b viruses (HPIV). Essential for spread and pathogenesis of influenza A virus (strains H1N1, H3N2 and H7N9); involved in proteolytic cleavage and activation of hemagglutinin (HA) protein which is essential for viral infectivity. In terms of biological role, (Microbial infection) Receptor for human coronavirus HKU1-CoV, acts synergistically with disialoside glycans to facilitate the entry of the virus. After binding to cell-surface disialoside glycans, the viral S protein interacts with the inactive form of TMPRSS2 and inhibits its protease activity. This Homo sapiens (Human) protein is Transmembrane protease serine 2.